A 251-amino-acid polypeptide reads, in one-letter code: MNKHERLDEIAKLVNKKGTIRTNEIVEGLNVSDMTVRRDLIELENKGILTKIHGGARSNSTFQYKEISHKEKHTRQIAEKRFIAKKAASLIEDGDTLFFGPGTTVELLAEEVNHHTLTIITNCLPVYKILLEKQTAHFRVYLIGGEMRHITEAFVGEMANAMLEKLRFSKMFFSSNAVNKGAVMTSTLDEAYTQQLALSNSIEKYLLIDHTKVGKEDFTSFCQLNELTAVVMDYEDEEKVETIKTYIEVVD.

In terms of domain architecture, HTH deoR-type spans 3-58 (KHERLDEIAKLVNKKGTIRTNEIVEGLNVSDMTVRRDLIELENKGILTKIHGGARS). The segment at residues 20 to 39 (IRTNEIVEGLNVSDMTVRRD) is a DNA-binding region (H-T-H motif).

Repressor of the lactose catabolism operon. Galactose-6-phosphate is the inducer. The chain is Lactose phosphotransferase system repressor (lacR) from Staphylococcus aureus (strain NCTC 8325 / PS 47).